The following is a 2121-amino-acid chain: Non-reducing polyketide synthase aoiG (2121 aa).

The Starter acyltransferase (SAT) domain maps to 5–258 (YIFGDQTVRV…LPVSIYAPYH (254 aa)). Residues 386–817 (SSKIAIIGFS…GGNTAVLVED (432 aa)) form the Ketosynthase family 3 (KS3) domain. Active-site for beta-ketoacyl synthase activity residues include cysteine 558, histidine 693, and histidine 735. The 319-residue stretch at 921–1239 (FLFTGQGAQQ…LSVLHLAGVR (319 aa)) folds into the Malonyl-CoA:ACP transacylase (MAT) domain. Residues 1302–1433 (QKILEEEMTA…CTIELQRPHQ (132 aa)) form an N-terminal hotdog fold region. The 307-residue stretch at 1302-1608 (QKILEEEMTA…FQKVARRVLE (307 aa)) folds into the PKS/mFAS DH domain. Residue histidine 1334 is the Proton acceptor; for dehydratase activity of the active site. The C-terminal hotdog fold stretch occupies residues 1461–1608 (THKMRRGVAY…FQKVARRVLE (148 aa)). The active-site Proton donor; for dehydratase activity is aspartate 1519. In terms of domain architecture, Carrier 1 spans 1646–1723 (PHVEDAWQQV…SLRIYLNMSS (78 aa)). O-(pantetheine 4'-phosphoryl)serine is present on serine 1683. Residues 1728-1752 (DSIETSSYPTPDESTTTTITSPSGS) are compositionally biased toward low complexity. A disordered region spans residues 1728–1760 (DSIETSSYPTPDESTTTTITSPSGSDRNVGRNS). The Carrier 2 domain maps to 1763–1840 (DGVGTTVGLV…AITAALHAIF (78 aa)). O-(pantetheine 4'-phosphoryl)serine is present on serine 1800. A TE/CLC (thioesterase/Claisen cyclase) domain region spans residues 1872 to 1976 (TLFLFPDGSG…ILIDSPNPMG (105 aa)).

It depends on pantetheine 4'-phosphate as a cofactor.

Its function is as follows. Non-reducing polyketide synthase; part of the gene cluster that mediates the biosynthesis of a methylated derivative of known natural products orthosporin and diaporthin. AoiG catalyzes the biosynthesis of the hexaketide isocoumarin scaffold, via condensation of one acetyl-CoA starter unit with 6 malonyl-CoA units. An oxidoreductase that has still to be identified catalyzes the stereospecific reduction of the carbonyl moiety of the hexaketide isocoumarin scaffold to generate the S-configured secondary alcohol at C-11 of orthosporin. The methyltrasferase aoiF then catalyzes the biotransformation of not only orthosporin to diaporthin but also diaporthin to the final product, by performing a tandem methylation of the polyketide core. This is Non-reducing polyketide synthase aoiG from Aspergillus oryzae (strain ATCC 42149 / RIB 40) (Yellow koji mold).